The sequence spans 467 residues: MQDQKGKIISVIGPVVDVKFPEGQLPNVYDALKVKNEYSGEELILEVEQLIGDDTARCVAMDSTDGIRRGQEVINTLEPIKVPVGDTTLGRMVNLLGKPIDEKGDVEGEEYWPIHRDPPSLNEQDTSIEILETGIKCIDLLAPFPRGGKIGFFGGAGVGKTVLVMELIRNIAKEHQGISVFAGVGERTREGNDLWLEMQETGVIDSTALVFGQMNEPPGARFRVPLTALTISEYFRDRQKKDVLLFIDNIFRFVQAGSEVSALLGRMPSAVGYQPTLASDMGQLQERITSTKDGSITSVQAIYVPADDFTDPAPATTFAHLDANINLSRRQSELGLYPAVDPLDSTSKMLDPNVVGQDHYSVAREVKEVLQRYEDLQDIIAILGIEELSEEDRQIVNRARRIQRFLTQPFFVAERFTNYSGKYVNVEDTIKGFKEILEGKHDDLPESAFYMVGTIEEAVEKAKKMNE.

Gly-154–Thr-161 contacts ATP.

The protein belongs to the ATPase alpha/beta chains family. As to quaternary structure, F-type ATPases have 2 components, CF(1) - the catalytic core - and CF(0) - the membrane proton channel. CF(1) has five subunits: alpha(3), beta(3), gamma(1), delta(1), epsilon(1). CF(0) has three main subunits: a(1), b(2) and c(9-12). The alpha and beta chains form an alternating ring which encloses part of the gamma chain. CF(1) is attached to CF(0) by a central stalk formed by the gamma and epsilon chains, while a peripheral stalk is formed by the delta and b chains.

The protein localises to the cell inner membrane. The catalysed reaction is ATP + H2O + 4 H(+)(in) = ADP + phosphate + 5 H(+)(out). Functionally, produces ATP from ADP in the presence of a proton gradient across the membrane. The catalytic sites are hosted primarily by the beta subunits. The sequence is that of ATP synthase subunit beta from Petrotoga mobilis (strain DSM 10674 / SJ95).